The sequence spans 100 residues: Urease subunit gamma (100 aa).

Belongs to the urease gamma subunit family. Heterotrimer of UreA (gamma), UreB (beta) and UreC (alpha) subunits. Three heterotrimers associate to form the active enzyme.

The protein resides in the cytoplasm. The catalysed reaction is urea + 2 H2O + H(+) = hydrogencarbonate + 2 NH4(+). It participates in nitrogen metabolism; urea degradation; CO(2) and NH(3) from urea (urease route): step 1/1. In Pseudomonas entomophila (strain L48), this protein is Urease subunit gamma.